The following is a 428-amino-acid chain: GTPase Obg (428 aa).

The Obg domain maps to methionine 1–leucine 158. Residues alanine 159–glutamate 329 enclose the OBG-type G domain. Residues glycine 165 to serine 172, phenylalanine 190 to threonine 194, aspartate 212 to glycine 215, asparagine 282 to aspartate 285, and serine 310 to isoleucine 312 contribute to the GTP site. 2 residues coordinate Mg(2+): serine 172 and threonine 192. The 79-residue stretch at lysine 350–glutamate 428 folds into the OCT domain.

This sequence belongs to the TRAFAC class OBG-HflX-like GTPase superfamily. OBG GTPase family. In terms of assembly, monomer. It depends on Mg(2+) as a cofactor.

The protein resides in the cytoplasm. In terms of biological role, an essential GTPase which binds GTP, GDP and possibly (p)ppGpp with moderate affinity, with high nucleotide exchange rates and a fairly low GTP hydrolysis rate. Plays a role in control of the cell cycle, stress response, ribosome biogenesis and in those bacteria that undergo differentiation, in morphogenesis control. The chain is GTPase Obg from Shouchella clausii (strain KSM-K16) (Alkalihalobacillus clausii).